The following is a 233-amino-acid chain: 7-cyano-7-deazaguanine synthase (233 aa).

7–17 (LSGGLDSAVTS) is a binding site for ATP. Positions 195, 206, 209, and 212 each coordinate Zn(2+).

It belongs to the QueC family. Zn(2+) serves as cofactor.

It carries out the reaction 7-carboxy-7-deazaguanine + NH4(+) + ATP = 7-cyano-7-deazaguanine + ADP + phosphate + H2O + H(+). It functions in the pathway purine metabolism; 7-cyano-7-deazaguanine biosynthesis. Functionally, catalyzes the ATP-dependent conversion of 7-carboxy-7-deazaguanine (CDG) to 7-cyano-7-deazaguanine (preQ(0)). This is 7-cyano-7-deazaguanine synthase from Methanococcus maripaludis (strain C5 / ATCC BAA-1333).